Reading from the N-terminus, the 1011-residue chain is Protein argonaute 1C (1011 aa).

Over residues 1–11 (MASRRPTHRHH) the composition is skewed to basic residues. Disordered stretches follow at residues 1-95 (MASR…SPLA) and 107-147 (RPSE…PLRP). Low complexity-rich tracts occupy residues 28 to 53 (ARYAQPQPQPQQQQQQQGRGCRARGA) and 61 to 92 (QQQQQQPRSTPTRATTVTVASSSSTTATASSS). A compositionally biased stretch (polar residues) spans 127–140 (ATTTPHHIPSSSKS). The 111-residue stretch at 352 to 462 (PVIDFVAQLL…LPMEVCKIVE (111 aa)) folds into the PAZ domain. Positions 638-959 (LLIGILPDNN…AAFRARFYME (322 aa)) constitute a Piwi domain. Positions 963 to 982 (SDSSSVVSGPGVRGPLSGSS) are enriched in low complexity. The tract at residues 963–994 (SDSSSVVSGPGVRGPLSGSSTSRTRAPGGAAV) is disordered.

It belongs to the argonaute family. Ago subfamily.

In terms of biological role, probably involved in the RNA silencing pathway. May bind to short RNAs such as microRNAs (miRNAs) or short interfering RNAs (siRNAs), and represses the translation of mRNAs which are complementary to them. In Oryza sativa subsp. japonica (Rice), this protein is Protein argonaute 1C (AGO1C).